The primary structure comprises 1203 residues: DNA-directed RNA polymerase subunit beta' (1203 aa).

4 residues coordinate Zn(2+): cysteine 60, cysteine 62, cysteine 75, and cysteine 78. 3 residues coordinate Mg(2+): aspartate 449, aspartate 451, and aspartate 453. Zn(2+)-binding residues include cysteine 818, cysteine 892, cysteine 899, and cysteine 902.

The protein belongs to the RNA polymerase beta' chain family. As to quaternary structure, the RNAP catalytic core consists of 2 alpha, 1 beta, 1 beta' and 1 omega subunit. When a sigma factor is associated with the core the holoenzyme is formed, which can initiate transcription. The cofactor is Mg(2+). Zn(2+) is required as a cofactor.

The catalysed reaction is RNA(n) + a ribonucleoside 5'-triphosphate = RNA(n+1) + diphosphate. DNA-dependent RNA polymerase catalyzes the transcription of DNA into RNA using the four ribonucleoside triphosphates as substrates. This is DNA-directed RNA polymerase subunit beta' from Bacillus anthracis.